A 303-amino-acid polypeptide reads, in one-letter code: Formylglycine-generating enzyme (303 aa).

Ca(2+)-binding residues include N188, I189, D202, Y204, N222, V223, G225, and V227. Residues C269 and C274 each coordinate Cu(+).

This sequence belongs to the sulfatase-modifying factor family. Requires Cu(+) as cofactor.

The catalysed reaction is L-cysteinyl-[sulfatase] + 2 a thiol + O2 = an organic disulfide + 3-oxo-L-alanyl-[sulfatase] + hydrogen sulfide + H2O + H(+). The protein operates within protein modification; sulfatase oxidation. Oxidase that catalyzes the conversion of cysteine to 3-oxoalanine on target proteins. 3-oxoalanine modification, which is also named formylglycine (fGly), occurs in the maturation of arylsulfatases and some alkaline phosphatases that use the hydrated form of 3-oxoalanine as a catalytic nucleophile. In Thermomonospora curvata (strain ATCC 19995 / DSM 43183 / JCM 3096 / KCTC 9072 / NBRC 15933 / NCIMB 10081 / Henssen B9), this protein is Formylglycine-generating enzyme.